The primary structure comprises 721 residues: Peroxisomal fatty acid beta-oxidation multifunctional protein AIM1 (721 aa).

E116 serves as the catalytic Nucleophile. E136 acts as the Proton acceptor in catalysis. Positions 719 to 721 (SKL) match the Microbody targeting signal motif.

It in the N-terminal section; belongs to the enoyl-CoA hydratase/isomerase family. The protein in the central section; belongs to the 3-hydroxyacyl-CoA dehydrogenase family. In terms of tissue distribution, widely expressed.

The protein localises to the peroxisome. The enzyme catalyses a (3S)-3-hydroxyacyl-CoA = a (2E)-enoyl-CoA + H2O. It catalyses the reaction a 4-saturated-(3S)-3-hydroxyacyl-CoA = a (3E)-enoyl-CoA + H2O. The catalysed reaction is (3S)-3-hydroxybutanoyl-CoA = (2E)-butenoyl-CoA + H2O. It carries out the reaction (3S)-hydroxyoctanoyl-CoA = (2E)-octenoyl-CoA + H2O. The enzyme catalyses (3S)-3-hydroxydodecanoyl-CoA = (2E)-dodecenoyl-CoA + H2O. It catalyses the reaction (3S)-hydroxytetradecanoyl-CoA = (2E)-tetradecenoyl-CoA + H2O. The catalysed reaction is (3S)-hydroxyhexanoyl-CoA = (2E)-hexenoyl-CoA + H2O. It carries out the reaction a (3Z)-enoyl-CoA = a 4-saturated (2E)-enoyl-CoA. The enzyme catalyses a (3E)-enoyl-CoA = a 4-saturated (2E)-enoyl-CoA. It catalyses the reaction (3S)-3-hydroxybutanoyl-CoA = (3R)-3-hydroxybutanoyl-CoA. The catalysed reaction is a (3S)-3-hydroxyacyl-CoA + NAD(+) = a 3-oxoacyl-CoA + NADH + H(+). It carries out the reaction (3S)-3-hydroxybutanoyl-CoA + NAD(+) = acetoacetyl-CoA + NADH + H(+). The enzyme catalyses (3S)-hydroxyhexanoyl-CoA + NAD(+) = 3-oxohexanoyl-CoA + NADH + H(+). It catalyses the reaction (3S)-hydroxyoctanoyl-CoA + NAD(+) = 3-oxooctanoyl-CoA + NADH + H(+). The catalysed reaction is (3S)-3-hydroxydodecanoyl-CoA + NAD(+) = 3-oxododecanoyl-CoA + NADH + H(+). It carries out the reaction (3S)-hydroxytetradecanoyl-CoA + NAD(+) = 3-oxotetradecanoyl-CoA + NADH + H(+). Its pathway is lipid metabolism; fatty acid beta-oxidation. In terms of biological role, involved in peroxisomal fatty acid beta-oxidation. Required for wound-induced jasmonate biosynthesis. Possesses enoyl-CoA hydratase activity against short chain substrates (C4-C6) and 3-hydroxyacyl-CoA dehydrogenase activity against chains of variable sizes (C6-C16). Possesses cinnamoyl-CoA hydratase activity and is involved in the peroxisomal beta-oxidation pathway for the biosynthesis of benzoic acid (BA). Required for the accumulation in seeds of benzoylated glucosinolates (BGs) and substituted hydroxybenzoylated choline esters, which are BA-containing secondary metabolites. Required for salicylic acid (SA) in seeds. This chain is Peroxisomal fatty acid beta-oxidation multifunctional protein AIM1 (AIM1), found in Arabidopsis thaliana (Mouse-ear cress).